A 926-amino-acid chain; its full sequence is Beta-mannosidase A (926 aa).

Positions 1–21 (MHVKAETVLALLTPAPPSVVG) are cleaved as a signal peptide. 5 N-linked (GlcNAc...) asparagine glycosylation sites follow: Asn-40, Asn-242, Asn-277, Asn-311, and Asn-342. Glu-474 functions as the Proton donor in the catalytic mechanism. Residues Asn-532, Asn-603, Asn-626, Asn-653, Asn-733, Asn-756, Asn-785, Asn-793, Asn-819, and Asn-905 are each glycosylated (N-linked (GlcNAc...) asparagine).

Belongs to the glycosyl hydrolase 2 family. Beta-mannosidase A subfamily. In terms of assembly, homodimer.

It is found in the secreted. It carries out the reaction Hydrolysis of terminal, non-reducing beta-D-mannose residues in beta-D-mannosides.. It functions in the pathway glycan metabolism; N-glycan degradation. In terms of biological role, exoglycosidase that cleaves the single beta-linked mannose residue from the non-reducing end of beta-mannosidic oligosaccharides of various complexity and length. Involved in the degradation of polymeric mannan and galactomannan. The sequence is that of Beta-mannosidase A (mndA) from Aspergillus fumigatus (strain CBS 144.89 / FGSC A1163 / CEA10) (Neosartorya fumigata).